Here is a 541-residue protein sequence, read N- to C-terminus: Myrosinase 1 (541 aa).

The N-terminal stretch at 1–19 (MKLLMLAFVFLLALATCKG) is a signal peptide. 3 disulfide bridges follow: Cys24/Cys449, Cys32/Cys445, and Cys224/Cys232. A glycan (N-linked (GlcNAc...) asparagine) is linked at Asn33. Gln57 serves as a coordination point for a beta-D-glucoside. An N-linked (GlcNAc...) asparagine glycan is attached at Asn108. His159 lines the a beta-D-glucoside pocket. N-linked (GlcNAc...) asparagine glycosylation occurs at Asn175. 204 to 205 (NQ) serves as a coordination point for a beta-D-glucoside. The N-linked (GlcNAc...) asparagine glycan is linked to Asn236. A beta-D-glucoside is bound at residue Tyr348. Asn356 and Asn379 each carry an N-linked (GlcNAc...) asparagine glycan. Residues Glu420, Trp468, 475–476 (EF), and Phe484 contribute to the a beta-D-glucoside site. Residue Glu420 is the Nucleophile of the active site. N-linked (GlcNAc...) asparagine glycosylation is found at Asn493 and Asn512.

Belongs to the glycosyl hydrolase 1 family. In terms of assembly, homodimer. As to expression, expressed in guard cells, phloem-associated cells and myrosin cells.

The protein resides in the vacuole. The catalysed reaction is a thioglucoside + H2O = a sugar + a thiol.. The enzyme catalyses Hydrolysis of terminal, non-reducing beta-D-glucosyl residues with release of beta-D-glucose.. In terms of biological role, degradation of glucosinolates (glucose residue linked by a thioglucoside bound to an amino acid derivative) to glucose, sulfate and any of the products: thiocyanates, isothiocyanates, nitriles, epithionitriles or oxazolidine-2-thiones. These toxic degradation products can deter insect herbivores. Seems to function in abscisic acid (ABA) and methyl jasmonate (MeJA) signaling in guard cells. Functionally redundant with TGG2. Hydrolyzes sinigrin and, with lower efficiency, p-nitrophenyl beta-D-glucoside. The chain is Myrosinase 1 from Arabidopsis thaliana (Mouse-ear cress).